The primary structure comprises 87 residues: HssA/B-like protein 28 (87 aa).

This sequence belongs to the hssA/B family.

In Dictyostelium discoideum (Social amoeba), this protein is HssA/B-like protein 28 (hssl28).